Consider the following 28-residue polypeptide: uncharacterized protein (28 aa).

This is an uncharacterized protein from Archaeoglobus fulgidus (strain ATCC 49558 / DSM 4304 / JCM 9628 / NBRC 100126 / VC-16).